The sequence spans 162 residues: Sec-independent protein translocase protein TatB (162 aa).

A helical transmembrane segment spans residues 1 to 21 (MFDIGFSELILIFVVGLVVLG). Positions 136–162 (LTAYYPPDDDLVSPSTTKLEQDKQNVN) are disordered.

This sequence belongs to the TatB family. As to quaternary structure, the Tat system comprises two distinct complexes: a TatABC complex, containing multiple copies of TatA, TatB and TatC subunits, and a separate TatA complex, containing only TatA subunits. Substrates initially bind to the TatABC complex, which probably triggers association of the separate TatA complex to form the active translocon.

The protein localises to the cell inner membrane. Part of the twin-arginine translocation (Tat) system that transports large folded proteins containing a characteristic twin-arginine motif in their signal peptide across membranes. Together with TatC, TatB is part of a receptor directly interacting with Tat signal peptides. TatB may form an oligomeric binding site that transiently accommodates folded Tat precursor proteins before their translocation. This is Sec-independent protein translocase protein TatB from Haemophilus ducreyi (strain 35000HP / ATCC 700724).